Here is a 147-residue protein sequence, read N- to C-terminus: 18 kDa antigen 1 (147 aa).

In terms of domain architecture, sHSP spans 21–131 (TPTRPAVMPM…RPRKIAVGAA (111 aa)).

Belongs to the small heat shock protein (HSP20) family.

In terms of biological role, not known. This protein is one of the major immune reactive proteins in mycobacteria. The chain is 18 kDa antigen 1 from Mycobacterium avium.